The following is a 313-amino-acid chain: Pseudouridine-5'-phosphate glycosidase (313 aa).

The Proton donor role is filled by E34. Substrate-binding residues include K95 and V115. D147 lines the Mn(2+) pocket. A substrate-binding site is contributed by 149 to 151 (SAD). Residue K168 is the Nucleophile of the active site.

Belongs to the pseudouridine-5'-phosphate glycosidase family. As to quaternary structure, homotrimer. It depends on Mn(2+) as a cofactor.

It carries out the reaction D-ribose 5-phosphate + uracil = psi-UMP + H2O. Functionally, catalyzes the reversible cleavage of pseudouridine 5'-phosphate (PsiMP) to ribose 5-phosphate and uracil. Functions biologically in the cleavage direction, as part of a pseudouridine degradation pathway. This chain is Pseudouridine-5'-phosphate glycosidase, found in Deinococcus radiodurans (strain ATCC 13939 / DSM 20539 / JCM 16871 / CCUG 27074 / LMG 4051 / NBRC 15346 / NCIMB 9279 / VKM B-1422 / R1).